Reading from the N-terminus, the 571-residue chain is Pectinesterase/pectinesterase inhibitor (571 aa).

A pectinesterase inhibitor region spans residues 27-178 (NSHQKAVESL…KILSSNAIDI (152 aa)). A disordered region spans residues 233–254 (AQAGRPGAPADEGIGEGGGGGG). Residues 259-558 (THVVAKDGSG…TVANWLTPAN (300 aa)) are pectinesterase. Substrate contacts are provided by Thr336 and Gln366. The active-site Proton donor; for pectinesterase activity is the Asp389. Asp410 (nucleophile; for pectinesterase activity) is an active-site residue. Substrate is bound by residues Arg479 and Trp481.

The protein in the N-terminal section; belongs to the PMEI family. This sequence in the C-terminal section; belongs to the pectinesterase family.

It localises to the secreted. It is found in the cell wall. The catalysed reaction is [(1-&gt;4)-alpha-D-galacturonosyl methyl ester](n) + n H2O = [(1-&gt;4)-alpha-D-galacturonosyl](n) + n methanol + n H(+). It participates in glycan metabolism; pectin degradation; 2-dehydro-3-deoxy-D-gluconate from pectin: step 1/5. Functionally, acts in the modification of cell walls via demethylesterification of cell wall pectin. This Brassica campestris (Field mustard) protein is Pectinesterase/pectinesterase inhibitor.